A 172-amino-acid polypeptide reads, in one-letter code: NAD(P)H-quinone oxidoreductase subunit J (172 aa).

This sequence belongs to the complex I 30 kDa subunit family. In terms of assembly, NDH-1 can be composed of about 15 different subunits; different subcomplexes with different compositions have been identified which probably have different functions.

The protein resides in the cellular thylakoid membrane. It carries out the reaction a plastoquinone + NADH + (n+1) H(+)(in) = a plastoquinol + NAD(+) + n H(+)(out). It catalyses the reaction a plastoquinone + NADPH + (n+1) H(+)(in) = a plastoquinol + NADP(+) + n H(+)(out). Its function is as follows. NDH-1 shuttles electrons from an unknown electron donor, via FMN and iron-sulfur (Fe-S) centers, to quinones in the respiratory and/or the photosynthetic chain. The immediate electron acceptor for the enzyme in this species is believed to be plastoquinone. Couples the redox reaction to proton translocation, and thus conserves the redox energy in a proton gradient. Cyanobacterial NDH-1 also plays a role in inorganic carbon-concentration. The chain is NAD(P)H-quinone oxidoreductase subunit J from Synechococcus elongatus (strain ATCC 33912 / PCC 7942 / FACHB-805) (Anacystis nidulans R2).